The following is a 314-amino-acid chain: Aspartate carbamoyltransferase catalytic subunit (314 aa).

Residues Arg-55 and Thr-56 each contribute to the carbamoyl phosphate site. Lys-83 contacts L-aspartate. Carbamoyl phosphate-binding residues include Arg-105, His-134, and Gln-137. L-aspartate contacts are provided by Arg-167 and Arg-221. The carbamoyl phosphate site is built by Gly-262 and Pro-263.

This sequence belongs to the aspartate/ornithine carbamoyltransferase superfamily. ATCase family. Heterododecamer (2C3:3R2) of six catalytic PyrB chains organized as two trimers (C3), and six regulatory PyrI chains organized as three dimers (R2).

It carries out the reaction carbamoyl phosphate + L-aspartate = N-carbamoyl-L-aspartate + phosphate + H(+). Its pathway is pyrimidine metabolism; UMP biosynthesis via de novo pathway; (S)-dihydroorotate from bicarbonate: step 2/3. In terms of biological role, catalyzes the condensation of carbamoyl phosphate and aspartate to form carbamoyl aspartate and inorganic phosphate, the committed step in the de novo pyrimidine nucleotide biosynthesis pathway. In Corynebacterium urealyticum (strain ATCC 43042 / DSM 7109), this protein is Aspartate carbamoyltransferase catalytic subunit.